The following is a 163-amino-acid chain: Nucleotide-binding protein Dde_2479 (163 aa).

The protein belongs to the YajQ family.

In terms of biological role, nucleotide-binding protein. The chain is Nucleotide-binding protein Dde_2479 from Oleidesulfovibrio alaskensis (strain ATCC BAA-1058 / DSM 17464 / G20) (Desulfovibrio alaskensis).